A 200-amino-acid chain; its full sequence is Cytochrome c biogenesis ATP-binding export protein CcmA (200 aa).

The 199-residue stretch at 2–200 (LDVIELDFDY…NKADYEEYHL (199 aa)) folds into the ABC transporter domain. 34-41 (GSNGAGKT) contacts ATP.

This sequence belongs to the ABC transporter superfamily. CcmA exporter (TC 3.A.1.107) family. The complex is composed of two ATP-binding proteins (CcmA) and two transmembrane proteins (CcmB).

Its subcellular location is the cell inner membrane. It carries out the reaction heme b(in) + ATP + H2O = heme b(out) + ADP + phosphate + H(+). Part of the ABC transporter complex CcmAB involved in the biogenesis of c-type cytochromes; once thought to export heme, this seems not to be the case, but its exact role is uncertain. Responsible for energy coupling to the transport system. This Legionella pneumophila (strain Lens) protein is Cytochrome c biogenesis ATP-binding export protein CcmA.